The following is a 156-amino-acid chain: Small ribosomal subunit protein uS7 (156 aa).

The protein belongs to the universal ribosomal protein uS7 family. As to quaternary structure, part of the 30S ribosomal subunit. Contacts proteins S9 and S11.

In terms of biological role, one of the primary rRNA binding proteins, it binds directly to 16S rRNA where it nucleates assembly of the head domain of the 30S subunit. Is located at the subunit interface close to the decoding center, probably blocks exit of the E-site tRNA. The polypeptide is Small ribosomal subunit protein uS7 (Geotalea daltonii (strain DSM 22248 / JCM 15807 / FRC-32) (Geobacter daltonii)).